Reading from the N-terminus, the 151-residue chain is MTETTPAPQTPAAPAGPAQSFVLERPIQTVGRRKEAVVRVRLVPGTGKFDLNGRSLEDYFPNKVHQQLIKAPLVTVDRVESFDIFAHLGGGGPSGQAGALRLGIARALILVSPEDRPALKKAGFLTRDPRATERKKYGLKKARKAPQYSKR.

A compositionally biased stretch (low complexity) spans Met1–Gln19. Disordered stretches follow at residues Met1–Ser20 and Lys121–Arg151. Over residues Arg127 to Lys136 the composition is skewed to basic and acidic residues. Positions Tyr137–Arg151 are enriched in basic residues.

This sequence belongs to the universal ribosomal protein uS9 family.

The chain is Small ribosomal subunit protein uS9 (rpsI) from Mycobacterium bovis (strain ATCC BAA-935 / AF2122/97).